The sequence spans 269 residues: GTP cyclohydrolase FolE2 (269 aa).

It belongs to the GTP cyclohydrolase IV family.

The enzyme catalyses GTP + H2O = 7,8-dihydroneopterin 3'-triphosphate + formate + H(+). The protein operates within cofactor biosynthesis; 7,8-dihydroneopterin triphosphate biosynthesis; 7,8-dihydroneopterin triphosphate from GTP: step 1/1. In terms of biological role, converts GTP to 7,8-dihydroneopterin triphosphate. The polypeptide is GTP cyclohydrolase FolE2 (Burkholderia ambifaria (strain ATCC BAA-244 / DSM 16087 / CCUG 44356 / LMG 19182 / AMMD) (Burkholderia cepacia (strain AMMD))).